The chain runs to 553 residues: ATP synthase F(1) complex subunit alpha, mitochondrial (553 aa).

A mitochondrion-targeting transit peptide spans 1–43 (MLSVRIAAAVARALPRRAGLVSKNALGSSFVGTRNLHASNTRL). Residues serine 53 and serine 65 each carry the phosphoserine modification. Serine 76 is modified (phosphoserine; alternate). Residue serine 76 is glycosylated (O-linked (GlcNAc) serine; alternate). Position 106 is a phosphoserine (serine 106). N6-acetyllysine occurs at positions 123, 126, and 132. Threonine 134 carries the phosphothreonine modification. Position 161 is an N6-acetyllysine; alternate (lysine 161). Residue lysine 161 is modified to N6-succinyllysine; alternate. The residue at position 166 (serine 166) is a Phosphoserine. N6-acetyllysine; alternate is present on lysine 167. Lysine 167 carries the N6-succinyllysine; alternate modification. Phosphoserine is present on serine 184. At arginine 204 the chain carries Omega-N-methylarginine. Positions 215, 217, 218, 219, and 220 each coordinate ATP. Threonine 219 is a Mg(2+) binding site. 2 positions are modified to N6-acetyllysine; alternate: lysine 230 and lysine 239. An N6-succinyllysine; alternate mark is found at lysine 230 and lysine 239. Lysine 240 carries the post-translational modification N6-acetyllysine. N6-acetyllysine; alternate is present on residues lysine 261 and lysine 305. Lysine 261 and lysine 305 each carry N6-succinyllysine; alternate. Aspartate 312 is a binding site for Mg(2+). Position 427 is an N6-acetyllysine; alternate (lysine 427). The residue at position 427 (lysine 427) is an N6-succinyllysine; alternate. Lysine 434 carries the N6-acetyllysine modification. 2 residues coordinate ATP: glutamine 473 and glutamine 475. Residues lysine 498, lysine 506, lysine 531, and lysine 539 each carry the N6-acetyllysine; alternate modification. N6-succinyllysine; alternate occurs at positions 498, 506, 531, and 539. Lysine 541 is subject to N6-acetyllysine.

The protein belongs to the ATPase alpha/beta chains family. In terms of assembly, homotrimer. Component of the ATP synthase complex composed at least of ATP5F1A/subunit alpha, ATP5F1B/subunit beta, ATP5MC1/subunit c (homooctomer), MT-ATP6/subunit a, MT-ATP8/subunit 8, ATP5ME/subunit e, ATP5MF/subunit f, ATP5MG/subunit g, ATP5MK/subunit k, ATP5MJ/subunit j, ATP5F1C/subunit gamma, ATP5F1D/subunit delta, ATP5F1E/subunit epsilon, ATP5PF/subunit F6, ATP5PB/subunit b, ATP5PD/subunit d, ATP5PO/subunit OSCP. ATP synthase complex consists of a soluble F(1) head domain (subunits alpha(3) and beta(3)) - the catalytic core - and a membrane F(0) domain - the membrane proton channel (subunits c, a, 8, e, f, g, k and j). These two domains are linked by a central stalk (subunits gamma, delta, and epsilon) rotating inside the F1 region and a stationary peripheral stalk (subunits F6, b, d, and OSCP). Interacts with ATPAF2. Interacts with HRG; the interaction occurs on the surface of T-cells and alters the cell morphology when associated with concanavalin (in vitro). Interacts with PLG (angiostatin peptide); the interaction inhibits most of the angiogenic properties of angiostatin. Interacts with BLOC1S1. Interacts with BCL2L1 isoform BCL-X(L); the interaction mediates the association of BCL2L1 isoform BCL-X(L) with the mitochondrial membrane F(1)F(0) ATP synthase and enhances neurons metabolic efficiency. Interacts with CLN5 and PPT1. Interacts with S100A1; this interaction increases F1-ATPase activity. Interacts with ABCB7; this interaction allows the regulation of cellular iron homeostasis and cellular reactive oxygen species (ROS) levels in cardiomyocytes. In terms of processing, acetylated on lysine residues. BLOC1S1 is required for acetylation. In terms of tissue distribution, expressed in flagella of epididymal sperm.

It is found in the mitochondrion. Its subcellular location is the mitochondrion inner membrane. It localises to the cell membrane. Subunit alpha, of the mitochondrial membrane ATP synthase complex (F(1)F(0) ATP synthase or Complex V) that produces ATP from ADP in the presence of a proton gradient across the membrane which is generated by electron transport complexes of the respiratory chain. ATP synthase complex consist of a soluble F(1) head domain - the catalytic core - and a membrane F(1) domain - the membrane proton channel. These two domains are linked by a central stalk rotating inside the F(1) region and a stationary peripheral stalk. During catalysis, ATP synthesis in the catalytic domain of F(1) is coupled via a rotary mechanism of the central stalk subunits to proton translocation. In vivo, can only synthesize ATP although its ATP hydrolase activity can be activated artificially in vitro. With the catalytic subunit beta (ATP5F1B), forms the catalytic core in the F(1) domain. Subunit alpha does not bear the catalytic high-affinity ATP-binding sites. The sequence is that of ATP synthase F(1) complex subunit alpha, mitochondrial from Rattus norvegicus (Rat).